Reading from the N-terminus, the 444-residue chain is Ubiquitin carboxyl-terminal hydrolase MINDY-3 (444 aa).

Cys-51 serves as the catalytic Nucleophile. Phosphoserine is present on Ser-124. Catalysis depends on His-286, which acts as the Proton acceptor.

It belongs to the MINDY deubiquitinase family. FAM188 subfamily. As to quaternary structure, interacts with COPS5.

The protein localises to the nucleus. The enzyme catalyses Thiol-dependent hydrolysis of ester, thioester, amide, peptide and isopeptide bonds formed by the C-terminal Gly of ubiquitin (a 76-residue protein attached to proteins as an intracellular targeting signal).. Hydrolase that can remove 'Lys-48'-linked conjugated ubiquitin from proteins. This chain is Ubiquitin carboxyl-terminal hydrolase MINDY-3, found in Mus musculus (Mouse).